Here is a 419-residue protein sequence, read N- to C-terminus: MTIVMIIVFCALMMLAVPVGYALIIAAGVAVLFNGYLPLSIVAQQIYDQTQSFPMLALPFFMLAGTLMLGGELGRQLLELASHAMQRWRGGPLSTTVVSSVVFGGVSGSAVANASALGSVLIPWQKKHGFPPALCAANNATSAVIDVLIPPSIPMILFSLVSGVSVANLFVAGILPGILMAASFVFVCWFVSVRRGYASQPSQTSRRQLATLALKSLPAVLLPVLIILFLRFGLATPTEVAVLSVVYSLALSLLYYRDLTWKRFCDNVVEAGMATGVVMLVIMGSAAVGWVLTFDQAPQQMADWVAANISSPIVIILMMNILMLIVGMPLDMPPAILLLGPIFVPLADTIGLDRVQLGLMMVINLGIGLYTPPIGTTLFISSSIAKSPLGETTRELWPFFAMAMTLLLAVSFIPALTLY.

The next 13 membrane-spanning stretches (helical) occupy residues 5–25 (MIIVFCALMMLAVPVGYALII), 26–46 (AAGVAVLFNGYLPLSIVAQQI), 53–73 (FPMLALPFFMLAGTLMLGGEL), 102–122 (VFGGVSGSAVANASALGSVLI), 144–164 (VIDVLIPPSIPMILFSLVSGV), 170–190 (FVAGILPGILMAASFVFVCWF), 210–230 (ATLALKSLPAVLLPVLIILFL), 234–254 (LATPTEVAVLSVVYSLALSLL), 274–294 (ATGVVMLVIMGSAAVGWVLTF), 309–329 (ISSPIVIILMMNILMLIVGMP), 332–352 (MPPAILLLGPIFVPLADTIGL), 360–380 (MMVINLGIGLYTPPIGTTLFI), and 396–416 (LWPFFAMAMTLLLAVSFIPAL).

It belongs to the YiaN/YgiK family.

Its subcellular location is the cell inner membrane. This is an uncharacterized protein from Sinorhizobium fredii (strain NBRC 101917 / NGR234).